A 279-amino-acid polypeptide reads, in one-letter code: S-methyl-5'-thioadenosine phosphorylase (279 aa).

Residues Ser-13, 55-56 (RH), and 88-89 (TA) each bind phosphate. Met-191 is a substrate binding site. Residue Thr-192 coordinates phosphate. Residue 215 to 217 (DYD) coordinates substrate.

This sequence belongs to the PNP/MTAP phosphorylase family. MTAP subfamily. As to quaternary structure, homotrimer.

Its subcellular location is the cytoplasm. The protein localises to the nucleus. The enzyme catalyses S-methyl-5'-thioadenosine + phosphate = 5-(methylsulfanyl)-alpha-D-ribose 1-phosphate + adenine. It participates in amino-acid biosynthesis; L-methionine biosynthesis via salvage pathway; S-methyl-5-thio-alpha-D-ribose 1-phosphate from S-methyl-5'-thioadenosine (phosphorylase route): step 1/1. Catalyzes the reversible phosphorylation of S-methyl-5'-thioadenosine (MTA) to adenine and 5-methylthioribose-1-phosphate. Involved in the breakdown of MTA, a major by-product of polyamine biosynthesis. Responsible for the first step in the methionine salvage pathway after MTA has been generated from S-adenosylmethionine. Has broad substrate specificity with 6-aminopurine nucleosides as preferred substrates. This is S-methyl-5'-thioadenosine phosphorylase from Anopheles darlingi (Mosquito).